We begin with the raw amino-acid sequence, 44 residues long: Cytochrome b559 subunit beta (44 aa).

A helical membrane pass occupies residues 19–35 (WLAIHGIAVPTIFFLGA). Heme is bound at residue His-23.

The protein belongs to the PsbE/PsbF family. As to quaternary structure, heterodimer of an alpha subunit and a beta subunit. PSII is composed of 1 copy each of membrane proteins PsbA, PsbB, PsbC, PsbD, PsbE, PsbF, PsbH, PsbI, PsbJ, PsbK, PsbL, PsbM, PsbT, PsbX, PsbY, PsbZ, Psb30/Ycf12, at least 3 peripheral proteins of the oxygen-evolving complex and a large number of cofactors. It forms dimeric complexes. Requires heme b as cofactor.

It is found in the plastid. The protein localises to the chloroplast thylakoid membrane. Its function is as follows. This b-type cytochrome is tightly associated with the reaction center of photosystem II (PSII). PSII is a light-driven water:plastoquinone oxidoreductase that uses light energy to abstract electrons from H(2)O, generating O(2) and a proton gradient subsequently used for ATP formation. It consists of a core antenna complex that captures photons, and an electron transfer chain that converts photonic excitation into a charge separation. The polypeptide is Cytochrome b559 subunit beta (Chlamydomonas reinhardtii (Chlamydomonas smithii)).